A 433-amino-acid polypeptide reads, in one-letter code: Trigger factor (433 aa).

The region spanning 163 to 248 (GDTVNIDFSG…VNEIKFKEVP (86 aa)) is the PPIase FKBP-type domain.

The protein belongs to the FKBP-type PPIase family. Tig subfamily.

It is found in the cytoplasm. The catalysed reaction is [protein]-peptidylproline (omega=180) = [protein]-peptidylproline (omega=0). In terms of biological role, involved in protein export. Acts as a chaperone by maintaining the newly synthesized protein in an open conformation. Functions as a peptidyl-prolyl cis-trans isomerase. In Staphylococcus aureus (strain bovine RF122 / ET3-1), this protein is Trigger factor.